A 663-amino-acid polypeptide reads, in one-letter code: Forkhead protein sep1 (663 aa).

A DNA-binding region (fork-head) is located at residues 128-222; that stretch reads KPPYSYAMLI…LKLKLRKPGV (95 aa). Disordered regions lie at residues 220 to 241 and 325 to 387; these read PGVN…KYGS and SPLQ…DVET. The span at 340 to 355 shows a compositional bias: low complexity; the sequence is SPASSASPSESLRNES. Serine 446 carries the post-translational modification Phosphoserine.

It is found in the nucleus. Functionally, required for promoter sequence element PCB-driven, M-phase-specific transcription. Acts as a transcriptional activator with a role in the regulation of mitosis. Regulates septation and the periodic transcription of cdc15. The chain is Forkhead protein sep1 (sep1) from Schizosaccharomyces pombe (strain 972 / ATCC 24843) (Fission yeast).